Consider the following 436-residue polypeptide: UPF0597 protein YhaM (436 aa).

The protein belongs to the UPF0597 family.

The protein is UPF0597 protein YhaM of Salmonella gallinarum (strain 287/91 / NCTC 13346).